The following is a 404-amino-acid chain: Cysteine desulfurase IscS (404 aa).

Pyridoxal 5'-phosphate is bound by residues 75–76 (AT), asparagine 155, glutamine 183, and 203–205 (SGH). An N6-(pyridoxal phosphate)lysine modification is found at lysine 206. Threonine 243 contributes to the pyridoxal 5'-phosphate binding site. The active-site Cysteine persulfide intermediate is cysteine 328. [2Fe-2S] cluster is bound at residue cysteine 328.

Belongs to the class-V pyridoxal-phosphate-dependent aminotransferase family. NifS/IscS subfamily. As to quaternary structure, homodimer. Forms a heterotetramer with IscU, interacts with other sulfur acceptors. Pyridoxal 5'-phosphate is required as a cofactor.

It is found in the cytoplasm. The catalysed reaction is (sulfur carrier)-H + L-cysteine = (sulfur carrier)-SH + L-alanine. The protein operates within cofactor biosynthesis; iron-sulfur cluster biosynthesis. Its function is as follows. Master enzyme that delivers sulfur to a number of partners involved in Fe-S cluster assembly, tRNA modification or cofactor biosynthesis. Catalyzes the removal of elemental sulfur atoms from cysteine to produce alanine. Functions as a sulfur delivery protein for Fe-S cluster synthesis onto IscU, an Fe-S scaffold assembly protein, as well as other S acceptor proteins. The sequence is that of Cysteine desulfurase IscS from Klebsiella pneumoniae (strain 342).